Here is a 327-residue protein sequence, read N- to C-terminus: cAMP-dependent protein kinase regulatory subunit (327 aa).

A disordered region spans residues 1 to 47 (MTNNISHNQKATEKVEAQNNNNITRKRRGAISSEPLGDKPATPLPNI). The interval 1–65 (MTNNISHNQK…RLEQALSNNI (65 aa)) is dimerization and phosphorylation. A Pseudophosphorylation motif motif is present at residues 27–31 (RRGAI). Ser32 is modified (phosphoserine). Residues 66 to 188 (MFSH…EKVS), Glu136, Arg145, 189 to 327 (ILRH…SQKS), Glu262, and Arg271 each bind 3',5'-cyclic AMP.

Belongs to the cAMP-dependent kinase regulatory chain family. In Dictyostelium the holoenzyme is a dimer composed of a regulatory (R) and a catalytic (C) subunit. In the presence of cAMP it dissociates into the active C subunit and an R monomer. In other eukaryotes the holoenzyme is a tetramer composed of 2 regulatory (R) and 2 catalytic (C) subunits. In the presence of cAMP it dissociates into active monomeric C subunits and an R dimer. Post-translationally, the pseudophosphorylation site binds to the substrate-binding region of the catalytic chain but is not phosphorylated. The physiological significance of phosphorylations by other kinases is unclear.

This chain is cAMP-dependent protein kinase regulatory subunit (pkaR), found in Dictyostelium discoideum (Social amoeba).